The chain runs to 477 residues: Endogenous retrovirus group V member 1 Env polyprotein (477 aa).

An N-terminal signal peptide occupies residues 1-21 (MTEKFLFLYLSLLPMPLLSQA). Topologically, residues 22–321 (QWNENSLVSF…NTTQPRQKRA (300 aa)) are extracellular. Residue Asn68 is glycosylated (N-linked (GlcNAc...) asparagine). A helical transmembrane segment spans residues 322 to 342 (LGLILAGMGAAIGMIAPWGGF). The Cytoplasmic portion of the chain corresponds to 343-477 (TYHDVTLRNL…LLSPLWPLSL (135 aa)).

This sequence belongs to the gamma type-C retroviral envelope protein family. As to expression, expressed in placenta.

The protein resides in the membrane. This chain is Endogenous retrovirus group V member 1 Env polyprotein (ERVV-1), found in Homo sapiens (Human).